Consider the following 276-residue polypeptide: Probable endonuclease 4 (276 aa).

His70, His108, Glu144, Asp177, His180, His211, Asp224, His226, and Glu256 together coordinate Zn(2+).

Belongs to the AP endonuclease 2 family. Requires Zn(2+) as cofactor.

The enzyme catalyses Endonucleolytic cleavage to 5'-phosphooligonucleotide end-products.. In terms of biological role, endonuclease IV plays a role in DNA repair. It cleaves phosphodiester bonds at apurinic or apyrimidinic (AP) sites, generating a 3'-hydroxyl group and a 5'-terminal sugar phosphate. This is Probable endonuclease 4 from Metamycoplasma arthritidis (strain 158L3-1) (Mycoplasma arthritidis).